A 244-amino-acid polypeptide reads, in one-letter code: ATP synthase subunit a, chloroplastic (244 aa).

A run of 5 helical transmembrane segments spans residues 35 to 55, 92 to 112, 131 to 151, 196 to 216, and 217 to 237; these read QVLITSWVVIAILLGSAVIAV, VPFIGTMFLFIFVSNWSGALL, INTTVALALLTSVAYFYAGLS, LVVVVLVSLVPSVVPIPVMFL, and GLFTSGIQALIFATLAAAYIG.

This sequence belongs to the ATPase A chain family. As to quaternary structure, F-type ATPases have 2 components, CF(1) - the catalytic core - and CF(0) - the membrane proton channel. CF(1) has five subunits: alpha(3), beta(3), gamma(1), delta(1), epsilon(1). CF(0) has four main subunits: a, b, b' and c.

It is found in the plastid. The protein localises to the chloroplast thylakoid membrane. Key component of the proton channel; it plays a direct role in the translocation of protons across the membrane. The chain is ATP synthase subunit a, chloroplastic from Gossypium hirsutum (Upland cotton).